The sequence spans 183 residues: Ribosome-recycling factor (183 aa).

Belongs to the RRF family.

Its subcellular location is the cytoplasm. Its function is as follows. Responsible for the release of ribosomes from messenger RNA at the termination of protein biosynthesis. May increase the efficiency of translation by recycling ribosomes from one round of translation to another. The polypeptide is Ribosome-recycling factor (Clostridium tetani (strain Massachusetts / E88)).